A 115-amino-acid polypeptide reads, in one-letter code: Salivary protein gSG6 (115 aa).

Residues 1–28 form the signal peptide; that stretch reads MAIRVELLLAMVLLPLLLLESVVPHAAA.

In terms of tissue distribution, female saliva (at protein level). Distal-lateral lobes of female salivary gland (at protein level). Not detected in male salivary gland (at protein level).

It is found in the secreted. Functionally, required for efficient probing and blood feeding. The sequence is that of Salivary protein gSG6 from Anopheles gambiae (African malaria mosquito).